The sequence spans 317 residues: MNINIMLKNKKKKFFSILAILFILMPNNSYASILTVFKPLGFIAAAIAHNVTNVEVIPPNGTTVENYYLLPFDLIKIKHSDFIILIGDQIEPFFFKKAVKYFKKKTIVLTKIKNIKFLLKHKSNFKKGKKKQKNTLQNKKEINNISYDMYLWLSPQIALESAIVIHDMLLKSMPQKKITIDKNLKYFKLCLSKTNKDIKKNVLSIKEKKYFTFHNTYKYFEKFYGLHPSGQFKTYPGIKTGVQYLYKIKNELLKKQAICVFIEPQFHANIIDFIIQGTNIQKENLDLFGTAIPLVQDSYVNFLVKLSNQYISCLKKI.

A signal peptide spans 1–31 (MNINIMLKNKKKKFFSILAILFILMPNNSYA). Cysteines 259 and 313 form a disulfide.

The protein belongs to the bacterial solute-binding protein 9 family.

It localises to the periplasm. In terms of biological role, part of the ATP-binding cassette (ABC) transport system ZnuABC involved in zinc import. Binds zinc with high affinity and specificity and delivers it to the membrane permease for translocation into the cytoplasm. In Buchnera aphidicola subsp. Schizaphis graminum (strain Sg), this protein is High-affinity zinc uptake system protein ZnuA (znuA).